Consider the following 510-residue polypeptide: Bifunctional purine biosynthesis protein PurH (510 aa).

An MGS-like domain is found at 1-143; the sequence is MTKRALISVS…KNHSGVLVLV (143 aa).

This sequence belongs to the PurH family.

The enzyme catalyses (6R)-10-formyltetrahydrofolate + 5-amino-1-(5-phospho-beta-D-ribosyl)imidazole-4-carboxamide = 5-formamido-1-(5-phospho-D-ribosyl)imidazole-4-carboxamide + (6S)-5,6,7,8-tetrahydrofolate. The catalysed reaction is IMP + H2O = 5-formamido-1-(5-phospho-D-ribosyl)imidazole-4-carboxamide. It functions in the pathway purine metabolism; IMP biosynthesis via de novo pathway; 5-formamido-1-(5-phospho-D-ribosyl)imidazole-4-carboxamide from 5-amino-1-(5-phospho-D-ribosyl)imidazole-4-carboxamide (10-formyl THF route): step 1/1. The protein operates within purine metabolism; IMP biosynthesis via de novo pathway; IMP from 5-formamido-1-(5-phospho-D-ribosyl)imidazole-4-carboxamide: step 1/1. In Deinococcus deserti (strain DSM 17065 / CIP 109153 / LMG 22923 / VCD115), this protein is Bifunctional purine biosynthesis protein PurH.